The sequence spans 669 residues: Filensin (669 aa).

Residues 1–33 (MYRRSYVFQARQERYERAQPAGPAAQPGGTAPG) form a head region. Ser5 is subject to Phosphoserine. One can recognise an IF rod domain in the interval 33 to 318 (GLAALQALGE…RIIEIEGSRL (286 aa)). The tract at residues 34 to 68 (LAALQALGERVAVQVQRARALQQRHAGLRRQLDAF) is coil 1A. Residue Ala35 is modified to N-acetylalanine. The linker 1 stretch occupies residues 69-77 (QRLGEQPGP). The tract at residues 78-177 (EDALARHVEA…RYKKNLLEIQ (100 aa)) is coil 1B. Residues 178–194 (TYITVLQQIVQTAPQVS) form a linker 12 region. The tract at residues 195-318 (LVTGMRESGL…RIIEIEGSRL (124 aa)) is coil 2. Residues 319-669 (SSVFIETPIS…GEKSLPDTRA (351 aa)) form a tail region. Position 339 is a phosphoserine (Ser339). Disordered regions lie at residues 380–435 (VEET…GGQI), 449–468 (RVSG…FTKG), and 505–618 (HHDG…KALS). The span at 408-417 (SQPGAGGGHG) shows a compositional bias: gly residues. A lipid anchor (N-myristoyl glycine) is attached at Gly432. The residue at position 513 (Ser513) is a Phosphoserine. Over residues 545-570 (NGLRAKEPKDLEEKDDDGKKEAEGSR) the composition is skewed to basic and acidic residues. Polar residues predominate over residues 583–593 (PSTSHSQTSGS). Thr585 is subject to Phosphothreonine.

Belongs to the intermediate filament family. In terms of assembly, part of a complex required for lens intermediate filament formation composed of BFSP1, BFSP2 and CRYAA. Identified in a complex that contains VIM, EZR, AHNAK, BFSP1, BFSP2, ANK2, PLEC, PRX and spectrin. Found in a complex composed of PPL (via C-terminal linker domain), BFSP1 and BFSP2 in the retinal lens. Within the complex interacts with BFSP2. Interacts (via C-terminus) with MIP (via C-terminus) in aged lens fiber cells. In terms of processing, proteolytically cleaved during lens cell fiber differentiation with increased fragmentation as fiber cell age increases. Post-translationally, myristoylated at Gly-432 following proteolytic cleavage at Asp-431. Acetylated at Ala-35 following proteolytic cleavage at Leu-34. In terms of tissue distribution, detected in eye lens fiber cells (at protein level). Expressed in retinal lens epithelial cells (at protein level).

The protein resides in the cell membrane. The protein localises to the cytoplasm. Its subcellular location is the cytoskeleton. It is found in the cell cortex. In terms of biological role, required for the correct formation of lens intermediate filaments as part of a complex composed of BFSP1, BFSP2 and CRYAA. Involved in altering the calcium regulation of MIP water permeability. This Mus musculus (Mouse) protein is Filensin (Bfsp1).